Consider the following 743-residue polypeptide: Phenylalanine ammonia-lyase 1 (743 aa).

The active-site Proton donor/acceptor is Tyr-120. Positions 224 to 226 (ASG) form a cross-link, 5-imidazolinone (Ala-Gly). A 2,3-didehydroalanine (Ser) modification is found at Ser-225. Positions 287, 377, 383, 413, 484, 512, and 515 each coordinate (E)-cinnamate.

This sequence belongs to the PAL/histidase family. In terms of assembly, homotetramer. In terms of processing, contains an active site 4-methylidene-imidazol-5-one (MIO), which is formed autocatalytically by cyclization and dehydration of residues Ala-Ser-Gly.

The protein resides in the cytoplasm. It carries out the reaction L-phenylalanine = (E)-cinnamate + NH4(+). It participates in phenylpropanoid metabolism; trans-cinnamate biosynthesis; trans-cinnamate from L-phenylalanine: step 1/1. Catalyzes the non-oxidative deamination of L-phenylalanine to form trans-cinnamic acid and a free ammonium ion. Facilitates the commitment step in phenylpropanoid pathways that produce secondary metabolites such as lignins, coumarins and flavonoids. The chain is Phenylalanine ammonia-lyase 1 from Pleurotus ostreatus (Oyster mushroom).